Consider the following 306-residue polypeptide: MGLAAPRKRTKISHDPNNTNWSRSTSGYGHKIMSSQGWTPGSFLGARNAAHADMFTAASASHIRVVVKDDTLGLGARSKRDPLDEPTGLDAFKGLLGRLNGKSDADLEAEQKKHEDAKIARYAATKWHTVTFISGGLLAQEKLVSLSAQKESPGAQHGSHQNRGGLDMQKSEEDANTSIKDNTLKALREEQVSSVPIAEDTSRSKSKRHRKDEQGKKDKKERKTKKRKHMDEPSPIDSDIPERAILETDLQATVTDSRDTTPPVAKVLSKERRPMGRHLLRGRHIAQKKKALMDDRSLNEIFMVKS.

Over residues methionine 1 to lysine 11 the composition is skewed to basic residues. Disordered stretches follow at residues methionine 1–glycine 27 and alanine 148–proline 241. Residues aspartate 15 to glycine 27 show a composition bias toward polar residues. Positions threonine 25–lysine 79 constitute a G-patch domain. A compositionally biased stretch (basic and acidic residues) spans asparagine 182–glutamine 191. The segment covering lysine 219 to lysine 228 has biased composition (basic residues).

Belongs to the PINX1 family.

The protein localises to the nucleus. It is found in the nucleolus. Its function is as follows. Involved in rRNA-processing at A0, A1 and A2 sites and negatively regulates telomerase. The polypeptide is Protein pxr1 (pxr1) (Aspergillus oryzae (strain ATCC 42149 / RIB 40) (Yellow koji mold)).